A 93-amino-acid chain; its full sequence is YcgL domain-containing protein Shew_2183 (93 aa).

The YcgL domain maps to 1–85; it reads MICAVYKSRL…PPVNLLEEYK (85 aa).

The chain is YcgL domain-containing protein Shew_2183 from Shewanella loihica (strain ATCC BAA-1088 / PV-4).